Consider the following 195-residue polypeptide: Heat shock protein beta-8 (195 aa).

Ser56 carries the phosphoserine modification. The residue at position 62 (Thr62) is a Phosphothreonine. Asymmetric dimethylarginine occurs at positions 70 and 77. Positions 73-184 (TATARFGVPA…TFGESSFNNE (112 aa)) constitute a sHSP domain. Residues 175 to 195 (TFGESSFNNELPQDSQEVTCT) form a disordered region. Residues 176 to 195 (FGESSFNNELPQDSQEVTCT) are compositionally biased toward polar residues.

It belongs to the small heat shock protein (HSP20) family. As to quaternary structure, monomer. Forms a ternary complex with BAG3 and HSPA1A. Component of the chaperone-assisted selective autophagy (CASA) complex consisting of BAG3, HSPA8/HSC70, HSPB8 and STUB1/CHIP. Interacts with HSPB1. Interacts with DNAJB6. Interacts with BAG3. Phosphorylated.

The protein resides in the cytoplasm. It localises to the nucleus. Its function is as follows. Involved in the chaperone-assisted selective autophagy (CASA), a crucial process for protein quality control, particularly in mechanical strained cells and tissues such as muscle. Displays temperature-dependent chaperone activity. The chain is Heat shock protein beta-8 (HSPB8) from Macaca mulatta (Rhesus macaque).